A 456-amino-acid polypeptide reads, in one-letter code: Membrane-bound lytic murein transglycosylase F (456 aa).

The N-terminal stretch at 1-22 (MKTWPSRAVSLLLLALALPVGC) is a signal peptide. The interval 23–267 (SEPPPPVRDP…ALDETWFGRF (245 aa)) is non-LT domain. Residues 268-456 (GDYDYVDVAR…YRALLAAQDL (189 aa)) form an LT domain region. The active site involves glutamate 314.

It in the N-terminal section; belongs to the bacterial solute-binding protein 3 family. In the C-terminal section; belongs to the transglycosylase Slt family.

It is found in the cell outer membrane. The enzyme catalyses Exolytic cleavage of the (1-&gt;4)-beta-glycosidic linkage between N-acetylmuramic acid (MurNAc) and N-acetylglucosamine (GlcNAc) residues in peptidoglycan, from either the reducing or the non-reducing ends of the peptidoglycan chains, with concomitant formation of a 1,6-anhydrobond in the MurNAc residue.. In terms of biological role, murein-degrading enzyme that degrades murein glycan strands and insoluble, high-molecular weight murein sacculi, with the concomitant formation of a 1,6-anhydromuramoyl product. Lytic transglycosylases (LTs) play an integral role in the metabolism of the peptidoglycan (PG) sacculus. Their lytic action creates space within the PG sacculus to allow for its expansion as well as for the insertion of various structures such as secretion systems and flagella. The polypeptide is Membrane-bound lytic murein transglycosylase F (Maricaulis maris (strain MCS10) (Caulobacter maris)).